Consider the following 482-residue polypeptide: FAD-linked oxidoreductase alt4 (482 aa).

In terms of domain architecture, FAD-binding PCMH-type spans 53–211; the sequence is ERPTYLAIVD…LEATFQVYPQ (159 aa).

It belongs to the oxygen-dependent FAD-linked oxidoreductase family. FAD is required as a cofactor.

The protein operates within secondary metabolite biosynthesis. In terms of biological role, FAD-linked oxidoreductase; part of the gene cluster that mediates the biosynthesis of alternapyrone derivatives. Alternapyrone is a decaketide with octa-methylation from methionine on every C2 unit except the third unit. All the domains in the polyketide synthase alt5 are apparently involved in alternapyrone synthesis, that is, the 8 CMeT, 7 KR, 7 DH, and 4 ER reactions in the 9 KS-mediated condensation steps required for alternapyrone synthesis. the alternapyrone produced by alt5 might be intensively modified by cytochrome P450 monooxygenases alt1, alt2 and alt3 and FAD-dependent oxidoreductase alt4 present in the alt gene cluster. This chain is FAD-linked oxidoreductase alt4, found in Alternaria solani.